The primary structure comprises 135 residues: MRLLHTMLRVGDLQRSIAFYTNVLGMKLLRTSENPEYKYSLAFVGYGPETEEAVIELTYNWGVESYDMGNAYGHIALSVDNAAEACERIRQNGGNVTREAGPVKGGSTIIAFVEDPDGYKIELIEAKDAGRGLGN.

In terms of domain architecture, VOC spans 2–126 (RLLHTMLRVG…DGYKIELIEA (125 aa)). H5 contributes to the Ni(2+) binding site. R9 lines the substrate pocket. Residue E56 coordinates Ni(2+). Positions 60 and 74 each coordinate substrate. Positions 74 and 122 each coordinate Ni(2+). E122 (proton donor/acceptor) is an active-site residue.

Belongs to the glyoxalase I family. Homodimer. Ni(2+) serves as cofactor.

It catalyses the reaction (R)-S-lactoylglutathione = methylglyoxal + glutathione. Its pathway is secondary metabolite metabolism; methylglyoxal degradation; (R)-lactate from methylglyoxal: step 1/2. Functionally, catalyzes the conversion of hemimercaptal, formed from methylglyoxal and glutathione, to S-lactoylglutathione. This chain is Lactoylglutathione lyase (gloA), found in Salmonella typhi.